Here is a 205-residue protein sequence, read N- to C-terminus: Adenylyl-sulfate kinase (205 aa).

31–38 provides a ligand contact to ATP; the sequence is GLSGAGKS. Residue S105 is the Phosphoserine intermediate of the active site.

This sequence belongs to the APS kinase family.

The catalysed reaction is adenosine 5'-phosphosulfate + ATP = 3'-phosphoadenylyl sulfate + ADP + H(+). It functions in the pathway sulfur metabolism; hydrogen sulfide biosynthesis; sulfite from sulfate: step 2/3. Its function is as follows. Catalyzes the synthesis of activated sulfate. The polypeptide is Adenylyl-sulfate kinase (Shewanella sp. (strain ANA-3)).